The primary structure comprises 328 residues: NADH-cytochrome b5 reductase-like protein (328 aa).

The FAD-binding FR-type domain maps to 76–184 (DKWLEFKLQD…KGPVEKFKYS (109 aa)). Thr201 carries the post-translational modification Phosphothreonine.

Belongs to the flavoprotein pyridine nucleotide cytochrome reductase family. FAD is required as a cofactor.

The protein localises to the mitochondrion. The enzyme catalyses 2 Fe(III)-[cytochrome b5] + NADH = 2 Fe(II)-[cytochrome b5] + NAD(+) + H(+). In terms of biological role, desaturation and elongation of fatty acids. This is NADH-cytochrome b5 reductase-like protein (CBR2) from Arabidopsis thaliana (Mouse-ear cress).